Reading from the N-terminus, the 416-residue chain is Cell division protein FtsZ (416 aa).

GTP-binding positions include 20–24 (GGGVN), 107–109 (GTG), Glu-138, Arg-142, and Asp-186. Polar residues predominate over residues 319 to 335 (QETNANNSSPAQRQAES). The segment at 319-416 (QETNANNSSP…DSLDFPDFLK (98 aa)) is disordered. The segment covering 376-392 (QDDDIPDDAGFDVDLPA) has biased composition (acidic residues). Residues 404–416 (ARKDSLDFPDFLK) are compositionally biased toward basic and acidic residues.

The protein belongs to the FtsZ family. In terms of assembly, homodimer. Polymerizes to form a dynamic ring structure in a strictly GTP-dependent manner. Interacts directly with several other division proteins.

The protein resides in the cytoplasm. Functionally, essential cell division protein that forms a contractile ring structure (Z ring) at the future cell division site. The regulation of the ring assembly controls the timing and the location of cell division. One of the functions of the FtsZ ring is to recruit other cell division proteins to the septum to produce a new cell wall between the dividing cells. Binds GTP and shows GTPase activity. The polypeptide is Cell division protein FtsZ (Kocuria rhizophila (strain ATCC 9341 / DSM 348 / NBRC 103217 / DC2201)).